A 403-amino-acid chain; its full sequence is Tryptophan synthase beta chain 1 (403 aa).

The residue at position 96 (Lys-96) is an N6-(pyridoxal phosphate)lysine.

The protein belongs to the TrpB family. Tetramer of two alpha and two beta chains. Pyridoxal 5'-phosphate serves as cofactor.

The enzyme catalyses (1S,2R)-1-C-(indol-3-yl)glycerol 3-phosphate + L-serine = D-glyceraldehyde 3-phosphate + L-tryptophan + H2O. Its pathway is amino-acid biosynthesis; L-tryptophan biosynthesis; L-tryptophan from chorismate: step 5/5. In terms of biological role, the beta subunit is responsible for the synthesis of L-tryptophan from indole and L-serine. The protein is Tryptophan synthase beta chain 1 (trpB1) of Wolinella succinogenes (strain ATCC 29543 / DSM 1740 / CCUG 13145 / JCM 31913 / LMG 7466 / NCTC 11488 / FDC 602W) (Vibrio succinogenes).